We begin with the raw amino-acid sequence, 259 residues long: Glutamate 5-kinase (259 aa).

Residue Lys18 participates in ATP binding. Substrate-binding residues include Ser54, Asp141, and Asn153. Residue 173–174 (SD) participates in ATP binding.

It belongs to the glutamate 5-kinase family.

The protein resides in the cytoplasm. It carries out the reaction L-glutamate + ATP = L-glutamyl 5-phosphate + ADP. The protein operates within amino-acid biosynthesis; L-proline biosynthesis; L-glutamate 5-semialdehyde from L-glutamate: step 1/2. Catalyzes the transfer of a phosphate group to glutamate to form L-glutamate 5-phosphate. The chain is Glutamate 5-kinase from Clavibacter sepedonicus (Clavibacter michiganensis subsp. sepedonicus).